Here is a 156-residue protein sequence, read N- to C-terminus: Insulin (156 aa).

Positions 1–31 (MSKFLLQSHSANACLLTLLLTLASNLDISLA) are cleaved as a signal peptide. 4 disulfide bridges follow: Cys37/Cys114, Cys49/Cys119, Cys61/Cys128, and Cys112/Cys115. A propeptide spans 79–93 (DTENVNDKLRGILLN) (c peptide beta). The propeptide at 96 to 102 (EAFSYLT) is c peptide alpha. The propeptide at 141-156 (TGRSNSGHAQLEDNFS) is d peptide. A propeptide spans 144 to 156 (SNSGHAQLEDNFS) (d peptide short form). 4-carboxyglutamate is present on Glu152.

It belongs to the insulin family. In terms of assembly, heterodimer of a B chain or a B chain' and an A chain probably linked by three disulfide bonds. As to expression, expressed in the central region of the cerebral ganglia mostly within the F and C clusters.

It localises to the secreted. Involved in glucose metabolism. In Aplysia californica (California sea hare), this protein is Insulin (PIN).